The sequence spans 808 residues: Type VI secretion system spike protein VgrG4b (808 aa).

Belongs to the VgrG protein family.

Its subcellular location is the secreted. In terms of biological role, part of the H2 type VI secretion system (H2-T6SS) specialized secretion system, which delivers several virulence factors in both prokaryotic and eukaryotic cells during infection. Allows the delivery of the phospholipase effector PldA to target cells where it exerts its toxicity. This Pseudomonas aeruginosa (strain ATCC 15692 / DSM 22644 / CIP 104116 / JCM 14847 / LMG 12228 / 1C / PRS 101 / PAO1) protein is Type VI secretion system spike protein VgrG4b.